A 134-amino-acid polypeptide reads, in one-letter code: Prefoldin subunit 4 (134 aa).

Ala2 is modified (N-acetylalanine). Ser125 bears the Phosphoserine mark.

It belongs to the prefoldin subunit beta family. In terms of assembly, heterohexamer of two PFD-alpha type and four PFD-beta type subunits. Interacts with URI1; the interaction is phosphorylation-dependent and occurs in a growth-dependent manner.

The protein localises to the nucleus. Its subcellular location is the cytoplasm. It localises to the mitochondrion. Binds specifically to cytosolic chaperonin (c-CPN) and transfers target proteins to it. Binds to nascent polypeptide chain and promotes folding in an environment in which there are many competing pathways for nonnative proteins. The sequence is that of Prefoldin subunit 4 (PFDN4) from Homo sapiens (Human).